Consider the following 146-residue polypeptide: Large ribosomal subunit protein uL15 (146 aa).

Residues 1–13 show a composition bias toward basic and acidic residues; that stretch reads MKLHELRPAEGSR. Residues 1-55 are disordered; it reads MKLHELRPAEGSRKSPKRVGRGTGSGLGKTSARGENGQNSRSGGGVRPGFEGGQM. Residues 42 to 52 are compositionally biased toward gly residues; that stretch reads SGGGVRPGFEG.

It belongs to the universal ribosomal protein uL15 family. Part of the 50S ribosomal subunit.

In terms of biological role, binds to the 23S rRNA. The polypeptide is Large ribosomal subunit protein uL15 (Clostridium tetani (strain Massachusetts / E88)).